The primary structure comprises 274 residues: Thymidylate synthase (274 aa).

A dUMP-binding site is contributed by Arg-21. His-51 serves as a coordination point for (6R)-5,10-methylene-5,6,7,8-tetrahydrofolate. 123–124 (RR) serves as a coordination point for dUMP. Cys-156 functions as the Nucleophile in the catalytic mechanism. DUMP is bound by residues 176–179 (RSAD), Asn-187, and 217–219 (HIY). Asp-179 is a binding site for (6R)-5,10-methylene-5,6,7,8-tetrahydrofolate. Ala-273 contacts (6R)-5,10-methylene-5,6,7,8-tetrahydrofolate.

This sequence belongs to the thymidylate synthase family. Bacterial-type ThyA subfamily. In terms of assembly, homodimer.

Its subcellular location is the cytoplasm. The enzyme catalyses dUMP + (6R)-5,10-methylene-5,6,7,8-tetrahydrofolate = 7,8-dihydrofolate + dTMP. It participates in pyrimidine metabolism; dTTP biosynthesis. Functionally, catalyzes the reductive methylation of 2'-deoxyuridine-5'-monophosphate (dUMP) to 2'-deoxythymidine-5'-monophosphate (dTMP) while utilizing 5,10-methylenetetrahydrofolate (mTHF) as the methyl donor and reductant in the reaction, yielding dihydrofolate (DHF) as a by-product. This enzymatic reaction provides an intracellular de novo source of dTMP, an essential precursor for DNA biosynthesis. This chain is Thymidylate synthase, found in Flavobacterium psychrophilum (strain ATCC 49511 / DSM 21280 / CIP 103535 / JIP02/86).